A 1123-amino-acid chain; its full sequence is Eukaryotic translation initiation factor 2-alpha kinase PK4 (1123 aa).

Residues 1-30 (MKKRIRSSYKVGSSNKYHKKNYTDNEKDKK) form a disordered region. Positions 21–30 (NYTDNEKDKK) are enriched in basic and acidic residues. ATP is bound by residues 245–253 (IGQGGFGSV) and K270. Disordered regions lie at residues 409-493 (FYSD…NDEG), 572-609 (RNED…NELD), and 742-800 (ENDD…DDDI). The span at 419-428 (KNKENPEKNH) shows a compositional bias: basic and acidic residues. A compositionally biased stretch (basic residues) spans 455–477 (HKLKKRKNKKKKSKKKRKSKSKI). 5 consecutive repeat copies span residues 576-582 (DKNGLDG), 583-589 (DKNGLDG), 590-596 (DKNGLDG), 597-603 (DKNGLDG), and 604-610 (DKNELDD). Positions 576–610 (DKNGLDGDKNGLDGDKNGLDGDKNGLDGDKNELDD) are 5 X 7 AA tandem repeat of D-K-N-[GE]-L-D-[GD]. Residues 678 to 1049 (TNVESINTNG…KIKVLLDPHL (372 aa)) enclose the Protein kinase domain. Positions 743–754 (NDDDDDDDDDDN) are enriched in acidic residues. The active-site Proton acceptor is D886. T953 is subject to Phosphothreonine.

It belongs to the protein kinase superfamily. Ser/Thr protein kinase family. GCN2 subfamily. May form oligomers in response to stress; oligomerization may result in catalytic activity. Interacts with BIP; the interaction is disrupted in response to stress. Post-translationally, auto-phosphorylated.

It is found in the endoplasmic reticulum membrane. The catalysed reaction is L-seryl-[protein] + ATP = O-phospho-L-seryl-[protein] + ADP + H(+). It carries out the reaction L-threonyl-[protein] + ATP = O-phospho-L-threonyl-[protein] + ADP + H(+). Its activity is regulated as follows. Dissociation from BIP and oligomerization, may results autophosphorylation and kinase activity induction. During the asexual blood stage, phosphorylates translation factor eIF2alpha in late schizonts resulting in protein translation inhibition. Plays a role in trophozoite differentiation into schizonts. The sequence is that of Eukaryotic translation initiation factor 2-alpha kinase PK4 from Plasmodium falciparum.